Here is an 811-residue protein sequence, read N- to C-terminus: MDSPGGVTDKKRISSERRKEKSRDAARCRRSKESEVFYELAHQLPLPHTVSAHLDKASIMRLTISYLRMRKLLDAGELETEANMEKELNCFYLKALDGFVMVLSEDGDMIYMSENVNKCMGLTQFDLTGHSVFDFTHPCDHEELREMLTHRNGPVKKGKEQNTERSFFLRMKCTLTSRGRTVNIKSATWKVLHCTGHIRVYDTCNNQTHCGYKKPPMTCLVLICEPIPHPSNIEVPLDSKTFLSRHSLDMKFSYCDERITELMGYEPEELLGRSIYEYYHALDSDHLTKTHHDMFTKGQVTTGQYRMLAKQGGYVWVETQATVIYNTKNSQPQCIVCVNYVLSGIVQKDLIFSLGQTECMLKPVESPEMKMTKIFSKDDWDDTNSLFEKLKQEPDALTVLAPAAGDTIISLDFSSNESDEQQCDEVPLYNDVMLPSSSEKLQNINIAMSPLPASETTKPLRSNADPALNREVVSKLEPNTETLELSFTMPQVQEQPTSPSDASTSQSSPEPSSPNDYCFDVDNDMANEFKLELVEKLFAIDTEAKNPFSTQETDLDLEMLAPYIPMDDDFQLRSFDQLSPLESSSSGSQNAATITILQQTQTPSTAADEIKPVAERVDDVKALIVPSSPVHVINDTSSAPASPYSGNRSRTASPIRAGKGTLEQTEKSCPGAPSLITVTLNKRSTAMDEELNPKMLALHNAQRKRKMEHDGSLFQAVGIGSLFQQTGDRGGNASLAWKRVKACKTNGHNGVEQKTIILLSTDIASKLLGQSMDESGLPQLTSYDCEVNAPIQGNRNLLQGEELLRALDQVN.

Residues 1 to 27 are disordered; it reads MDSPGGVTDKKRISSERRKEKSRDAAR. The segment covering 8-27 has biased composition (basic and acidic residues); that stretch reads TDKKRISSERRKEKSRDAAR. One can recognise a bHLH domain in the interval 17 to 70; the sequence is RRKEKSRDAARCRRSKESEVFYELAHQLPLPHTVSAHLDKASIMRLTISYLRMR. PAS domains are found at residues 80–157 and 228–298; these read TEAN…PVKK and PHPS…FTKG. The 44-residue stretch at 302 to 345 folds into the PAC domain; it reads TGQYRMLAKQGGYVWVETQATVIYNTKNSQPQCIVCVNYVLSGI. The interval 401–587 is ODD; that stretch reads APAAGDTIIS…LSPLESSSSG (187 aa). 4-hydroxyproline is present on Pro402. The disordered stretch occupies residues 490-518; it reads PQVQEQPTSPSDASTSQSSPEPSSPNDYC. Residues 496–514 show a composition bias toward low complexity; that stretch reads PTSPSDASTSQSSPEPSSP. Residues 529–573 form an NTAD region; sequence FKLELVEKLFAIDTEAKNPFSTQETDLDLEMLAPYIPMDDDFQLR. Position 562 is a 4-hydroxyproline (Pro562). The segment at 576–785 is ID; sequence DQLSPLESSS…GLPQLTSYDC (210 aa). Residues 634–652 are compositionally biased toward polar residues; sequence NDTSSAPASPYSGNRSRTA. The segment at 634–655 is disordered; the sequence is NDTSSAPASPYSGNRSRTASPI. Short sequence motifs (nuclear localization signal) lie at residues 703–706 and 718–721; these read RKRK and GIGS. The interval 771–811 is CTAD; the sequence is SMDESGLPQLTSYDCEVNAPIQGNRNLLQGEELLRALDQVN. A (3S)-3-hydroxyasparagine modification is found at Asn788.

As to quaternary structure, efficient DNA binding requires heterodimerization of an alpha and a beta/ARNT subunit. In normoxia, is hydroxylated on Pro-402 and Pro-562. The hydroxylated prolines promote interaction with VHL, initiating rapid ubiquitination and subsequent proteasomal degradation. Under hypoxia, proline hydroxylation is impaired and ubiquitination is attenuated, resulting in stabilization. Post-translationally, in normoxia, is hydroxylated on Asn-788, thus abrogating interaction with CREBBP and EP300 and preventing transcriptional activation. In terms of processing, the iron and 2-oxoglutarate dependent 3-hydroxylation of asparagine is (S) stereospecific within HIF CTAD domains.

The protein localises to the cytoplasm. The protein resides in the nucleus. Its subcellular location is the nucleus speckle. With respect to regulation, induced by reactive oxygen species (ROS). Functionally, functions as a master transcriptional regulator of the adaptive response to hypoxia. Under hypoxic conditions, activates the transcription of over 40 genes, including erythropoietin, glucose transporters, glycolytic enzymes, vascular endothelial growth factor, HILPDA, and other genes whose protein products increase oxygen delivery or facilitate metabolic adaptation to hypoxia. Plays an essential role in embryonic vascularization, tumor angiogenesis and pathophysiology of ischemic disease. The chain is Hypoxia-inducible factor 1-alpha (HIF1A) from Gallus gallus (Chicken).